Here is a 245-residue protein sequence, read N- to C-terminus: MKVIIVEDEFLAQQELSWLIKEHSQMEIVGTFDDGLDVLKFLQHNRVDAIFLDINIPSLDGVLLAQNISQFAHKPFIVFITAWKEHAVEAFELEAFDYILKPYQESRITGMLQKLEAAWQQQQTSSTTPAATVTRENDTINLVKDERIIVTPINDIYYAEAHEKMTFVYTRRESYVMPMNITEFFSKLPPSHFFRCHRSFCVNLNKIREIEPWFNNTYILRLKDLDFEVPVSRSKVKEFRQLMHL.

The Response regulatory domain maps to 2 to 116 (KVIIVEDEFL…RITGMLQKLE (115 aa)). At Asp53 the chain carries 4-aspartylphosphate. The 106-residue stretch at 140–245 (INLVKDERII…VKEFRQLMHL (106 aa)) folds into the HTH LytTR-type domain.

In terms of processing, phosphorylated by YpdA.

The protein localises to the cytoplasm. Its function is as follows. Member of the two-component regulatory system YpdA/YpdB. YpdB regulates expression of yhjX by binding to its promoter region. The chain is Transcriptional regulatory protein YpdB (ypdB) from Escherichia coli O6:H1 (strain CFT073 / ATCC 700928 / UPEC).